We begin with the raw amino-acid sequence, 264 residues long: Thymidylate synthase (264 aa).

Arg-21 is a dUMP binding site. Residue His-51 participates in (6R)-5,10-methylene-5,6,7,8-tetrahydrofolate binding. 126 to 127 (RR) provides a ligand contact to dUMP. Cys-146 (nucleophile) is an active-site residue. DUMP-binding positions include 166 to 169 (RSCD), Asn-177, and 207 to 209 (HLY). Residue Asp-169 coordinates (6R)-5,10-methylene-5,6,7,8-tetrahydrofolate. Residue Ala-263 coordinates (6R)-5,10-methylene-5,6,7,8-tetrahydrofolate.

Belongs to the thymidylate synthase family. Bacterial-type ThyA subfamily. As to quaternary structure, homodimer.

The protein localises to the cytoplasm. It catalyses the reaction dUMP + (6R)-5,10-methylene-5,6,7,8-tetrahydrofolate = 7,8-dihydrofolate + dTMP. It participates in pyrimidine metabolism; dTTP biosynthesis. In terms of biological role, catalyzes the reductive methylation of 2'-deoxyuridine-5'-monophosphate (dUMP) to 2'-deoxythymidine-5'-monophosphate (dTMP) while utilizing 5,10-methylenetetrahydrofolate (mTHF) as the methyl donor and reductant in the reaction, yielding dihydrofolate (DHF) as a by-product. This enzymatic reaction provides an intracellular de novo source of dTMP, an essential precursor for DNA biosynthesis. In Shigella dysenteriae serotype 1 (strain Sd197), this protein is Thymidylate synthase.